The chain runs to 185 residues: Elongation factor P (185 aa).

It belongs to the elongation factor P family.

It localises to the cytoplasm. The protein operates within protein biosynthesis; polypeptide chain elongation. Its function is as follows. Involved in peptide bond synthesis. Stimulates efficient translation and peptide-bond synthesis on native or reconstituted 70S ribosomes in vitro. Probably functions indirectly by altering the affinity of the ribosome for aminoacyl-tRNA, thus increasing their reactivity as acceptors for peptidyl transferase. The protein is Elongation factor P of Fervidobacterium nodosum (strain ATCC 35602 / DSM 5306 / Rt17-B1).